The chain runs to 502 residues: ATP synthase subunit alpha, chloroplastic (502 aa).

170–177 contributes to the ATP binding site; it reads GDRQTGKS.

The protein belongs to the ATPase alpha/beta chains family. F-type ATPases have 2 components, CF(1) - the catalytic core - and CF(0) - the membrane proton channel. CF(1) has five subunits: alpha(3), beta(3), gamma(1), delta(1), epsilon(1). CF(0) has four main subunits: a, b, b' and c.

It localises to the plastid. The protein resides in the chloroplast thylakoid membrane. It carries out the reaction ATP + H2O + 4 H(+)(in) = ADP + phosphate + 5 H(+)(out). Its function is as follows. Produces ATP from ADP in the presence of a proton gradient across the membrane. The alpha chain is a regulatory subunit. The chain is ATP synthase subunit alpha, chloroplastic from Guillardia theta (Cryptophyte).